Reading from the N-terminus, the 238-residue chain is Ribonuclease PH (238 aa).

The tract at residues 64–86 (GMLPRSTGSRMDREAARGKQSGR) is disordered. Phosphate contacts are provided by residues Arg-86 and 124-126 (GTR).

Belongs to the RNase PH family. As to quaternary structure, homohexameric ring arranged as a trimer of dimers.

It carries out the reaction tRNA(n+1) + phosphate = tRNA(n) + a ribonucleoside 5'-diphosphate. In terms of biological role, phosphorolytic 3'-5' exoribonuclease that plays an important role in tRNA 3'-end maturation. Removes nucleotide residues following the 3'-CCA terminus of tRNAs; can also add nucleotides to the ends of RNA molecules by using nucleoside diphosphates as substrates, but this may not be physiologically important. Probably plays a role in initiation of 16S rRNA degradation (leading to ribosome degradation) during starvation. The polypeptide is Ribonuclease PH (Methylobacillus flagellatus (strain ATCC 51484 / DSM 6875 / VKM B-1610 / KT)).